Consider the following 419-residue polypeptide: S-adenosylmethionine synthase (419 aa).

H15 contributes to the ATP binding site. Residue D17 participates in Mg(2+) binding. E43 provides a ligand contact to K(+). L-methionine is bound by residues E56 and Q100. Positions 100–110 (QSPDIAQGVDE) are flexible loop. ATP contacts are provided by residues 171 to 173 (DGK), 248 to 249 (KF), D257, 263 to 264 (RK), A280, and K284. Residue D257 participates in L-methionine binding. K288 contacts L-methionine.

It belongs to the AdoMet synthase family. As to quaternary structure, homotetramer; dimer of dimers. Mg(2+) serves as cofactor. K(+) is required as a cofactor.

It is found in the cytoplasm. It carries out the reaction L-methionine + ATP + H2O = S-adenosyl-L-methionine + phosphate + diphosphate. Its pathway is amino-acid biosynthesis; S-adenosyl-L-methionine biosynthesis; S-adenosyl-L-methionine from L-methionine: step 1/1. In terms of biological role, catalyzes the formation of S-adenosylmethionine (AdoMet) from methionine and ATP. The overall synthetic reaction is composed of two sequential steps, AdoMet formation and the subsequent tripolyphosphate hydrolysis which occurs prior to release of AdoMet from the enzyme. In Parasynechococcus marenigrum (strain WH8102), this protein is S-adenosylmethionine synthase.